The following is a 109-amino-acid chain: Glutaredoxin-C13 (109 aa).

Positions 2–108 constitute a Glutaredoxin domain; the sequence is AEMVARLASE…PMLKNAGALW (107 aa). An intrachain disulfide couples C22 to C25. The Responsive for interaction with TGA factors signature appears at 106 to 109; sequence ALWL.

Belongs to the glutaredoxin family. CC-type subfamily.

The protein localises to the cytoplasm. It is found in the nucleus. In terms of biological role, has a glutathione-disulfide oxidoreductase activity in the presence of NADPH and glutathione reductase. Reduces low molecular weight disulfides and proteins. This chain is Glutaredoxin-C13 (GRXC13), found in Oryza sativa subsp. japonica (Rice).